A 287-amino-acid polypeptide reads, in one-letter code: ATP synthase gamma chain (287 aa).

Belongs to the ATPase gamma chain family. F-type ATPases have 2 components, CF(1) - the catalytic core - and CF(0) - the membrane proton channel. CF(1) has five subunits: alpha(3), beta(3), gamma(1), delta(1), epsilon(1). CF(0) has three main subunits: a, b and c.

The protein localises to the cell inner membrane. Produces ATP from ADP in the presence of a proton gradient across the membrane. The gamma chain is believed to be important in regulating ATPase activity and the flow of protons through the CF(0) complex. The polypeptide is ATP synthase gamma chain (Xylella fastidiosa (strain M23)).